A 216-amino-acid polypeptide reads, in one-letter code: Probable nicotinate-nucleotide adenylyltransferase (216 aa).

It belongs to the NadD family.

It catalyses the reaction nicotinate beta-D-ribonucleotide + ATP + H(+) = deamido-NAD(+) + diphosphate. It functions in the pathway cofactor biosynthesis; NAD(+) biosynthesis; deamido-NAD(+) from nicotinate D-ribonucleotide: step 1/1. In terms of biological role, catalyzes the reversible adenylation of nicotinate mononucleotide (NaMN) to nicotinic acid adenine dinucleotide (NaAD). The protein is Probable nicotinate-nucleotide adenylyltransferase of Geobacter sp. (strain M21).